Reading from the N-terminus, the 89-residue chain is Small ribosomal subunit protein uS15 (89 aa).

This sequence belongs to the universal ribosomal protein uS15 family. As to quaternary structure, part of the 30S ribosomal subunit. Forms a bridge to the 50S subunit in the 70S ribosome, contacting the 23S rRNA.

In terms of biological role, one of the primary rRNA binding proteins, it binds directly to 16S rRNA where it helps nucleate assembly of the platform of the 30S subunit by binding and bridging several RNA helices of the 16S rRNA. Functionally, forms an intersubunit bridge (bridge B4) with the 23S rRNA of the 50S subunit in the ribosome. The chain is Small ribosomal subunit protein uS15 from Mannheimia succiniciproducens (strain KCTC 0769BP / MBEL55E).